The chain runs to 339 residues: Phenylalanine--tRNA ligase alpha subunit (339 aa).

Residue E250 coordinates Mg(2+).

The protein belongs to the class-II aminoacyl-tRNA synthetase family. Phe-tRNA synthetase alpha subunit type 1 subfamily. Tetramer of two alpha and two beta subunits. Requires Mg(2+) as cofactor.

It localises to the cytoplasm. The catalysed reaction is tRNA(Phe) + L-phenylalanine + ATP = L-phenylalanyl-tRNA(Phe) + AMP + diphosphate + H(+). The polypeptide is Phenylalanine--tRNA ligase alpha subunit (Parabacteroides distasonis (strain ATCC 8503 / DSM 20701 / CIP 104284 / JCM 5825 / NCTC 11152)).